A 602-amino-acid polypeptide reads, in one-letter code: Myotubularin (602 aa).

Residues 1-16 (MATSSTPKYNSNSLEN) are compositionally biased toward polar residues. Positions 1–33 (MATSSTPKYNSNSLENSVRRSPGDGINHEQNDE) are disordered. A compositionally biased stretch (basic and acidic residues) spans 17–33 (SVRRSPGDGINHEQNDE). Positions 28–96 (HEQNDEISRL…GVIARIEKMG (69 aa)) constitute a GRAM domain. Positions 162 to 537 (GWAVYDAMTE…RHLELWVNYY (376 aa)) constitute a Myotubularin phosphatase domain. Asn-287, Asn-312, and Ile-313 together coordinate a 1,2-diacyl-sn-glycero-3-phospho-(1D-myo-inositol-3,5-bisphosphate). The a 1,2-diacyl-sn-glycero-3-phospho-(1D-myo-inositol-3-phosphate) site is built by Asn-287, Asn-312, and Ile-313. The active-site Phosphocysteine intermediate is Cys-374. A 1,2-diacyl-sn-glycero-3-phospho-(1D-myo-inositol-3,5-bisphosphate)-binding residues include Ser-375, Asp-376, Gly-377, Trp-378, Asp-379, Arg-380, Lys-416, and Arg-420. A 1,2-diacyl-sn-glycero-3-phospho-(1D-myo-inositol-3-phosphate) is bound by residues Ser-375, Asp-376, Gly-377, Trp-378, Asp-379, and Arg-380. Residue Arg-420 coordinates a 1,2-diacyl-sn-glycero-3-phospho-(1D-myo-inositol-3-phosphate). The segment at 577–602 (NSPKINRSTTSPSSPSQMMPQVQTPF) is disordered. A compositionally biased stretch (low complexity) spans 584-602 (STTSPSSPSQMMPQVQTPF).

Belongs to the protein-tyrosine phosphatase family. Non-receptor class myotubularin subfamily.

It is found in the cytoplasm. The protein localises to the cell membrane. The protein resides in the cell projection. It localises to the filopodium. Its subcellular location is the ruffle. It is found in the late endosome. The protein localises to the myofibril. The protein resides in the sarcomere. The catalysed reaction is a 1,2-diacyl-sn-glycero-3-phospho-(1D-myo-inositol-3-phosphate) + H2O = a 1,2-diacyl-sn-glycero-3-phospho-(1D-myo-inositol) + phosphate. The enzyme catalyses a 1,2-diacyl-sn-glycero-3-phospho-(1D-myo-inositol-3,5-bisphosphate) + H2O = a 1,2-diacyl-sn-glycero-3-phospho-(1D-myo-inositol-5-phosphate) + phosphate. It carries out the reaction 1,2-dioctanoyl-sn-glycero-3-phospho-(1-D-myo-inositol-3-phosphate) + H2O = 1,2-dioctanoyl-sn-glycero-3-phospho-(1D-myo-inositol) + phosphate. It catalyses the reaction 1,2-dioctanoyl-sn-glycero-3-phospho-(1D-myo-inositol-3,5-bisphosphate) + H2O = 1,2-dioctanoyl-sn-glycero-3-phospho-(1D-myo-inositol-5-phosphate) + phosphate. The catalysed reaction is 1,2-dihexadecanoyl-sn-glycero-3-phospho-(1D-myo-inositol-3,5-phosphate) + H2O = 1,2-dihexadecanoyl-sn-glycero-3-phospho-(1D-myo-inositol-5-phosphate) + phosphate. In terms of biological role, lipid phosphatase which dephosphorylates phosphatidylinositol 3-monophosphate (PI3P) and phosphatidylinositol 3,5-bisphosphate (PI(3,5)P2). This Xenopus laevis (African clawed frog) protein is Myotubularin (mtm1).